The following is a 321-amino-acid chain: Probable arabinan endo-1,5-alpha-L-arabinosidase C (321 aa).

Residues 1 to 18 form the signal peptide; it reads MYLYTLILLFLASANVNA. Asp33 functions as the Proton acceptor in the catalytic mechanism. N-linked (GlcNAc...) asparagine glycosylation is present at Asn192. Glu200 acts as the Proton donor in catalysis. N-linked (GlcNAc...) asparagine glycosylation occurs at Asn224.

This sequence belongs to the glycosyl hydrolase 43 family.

It is found in the secreted. It carries out the reaction Endohydrolysis of (1-&gt;5)-alpha-arabinofuranosidic linkages in (1-&gt;5)-arabinans.. The protein operates within glycan metabolism; L-arabinan degradation. Its function is as follows. Endo-1,5-alpha-L-arabinanase involved in degradation of pectin. Its preferred substrate is linear 1,5-alpha-L-arabinan. This chain is Probable arabinan endo-1,5-alpha-L-arabinosidase C (abnC), found in Aspergillus fumigatus (strain ATCC MYA-4609 / CBS 101355 / FGSC A1100 / Af293) (Neosartorya fumigata).